The primary structure comprises 335 residues: Protein-arginine N-acetylglucosaminyltransferase SseK3 (335 aa).

Residues 51-53 (QWF) and Y75 contribute to the UDP-N-acetyl-alpha-D-glucosamine site. N-beta-linked (GlcNAc) arginine; by autocatalysis glycans are attached at residues R153 and R184. Residue 224-227 (YLDA) coordinates UDP-N-acetyl-alpha-D-glucosamine. The DXD motif motif lies at 226–228 (DAD). D228 provides a ligand contact to Mn(2+). E258 serves as the catalytic Proton acceptor. N-beta-linked (GlcNAc) arginine; by autocatalysis glycosylation occurs at R305. Mn(2+) contacts are provided by D325 and S327. Residues S327 and 332 to 335 (SSWR) each bind UDP-N-acetyl-alpha-D-glucosamine. R335 carries an N-beta-linked (GlcNAc) arginine; by autocatalysis glycan.

Belongs to the glycosyltransferase NleB family. Interacts with host TRIM32; without mediating its GlcNAcylation. It depends on Mn(2+) as a cofactor. Auto-glycosylated: arginine GlcNAcylation is required for activity toward death domain-containing host target proteins.

The protein resides in the secreted. The protein localises to the host Golgi apparatus. The enzyme catalyses L-arginyl-[protein] + UDP-N-acetyl-alpha-D-glucosamine = N(omega)-(N-acetyl-beta-D-glucosaminyl)-L-arginyl-[protein] + UDP + H(+). In terms of biological role, protein-arginine N-acetylglucosaminyltransferase effector that disrupts TNF signaling in infected cells, including NF-kappa-B signaling and apoptosis. Acts by catalyzing the transfer of a single N-acetylglucosamine (GlcNAc) to a conserved arginine residue in the death domain of host proteins such as TRADD, TNFRSF1A/TNFR1 and TNFRSF10B/TRAILR2: arginine GlcNAcylation prevents homotypic/heterotypic death domain interactions and assembly of the oligomeric TNF-alpha receptor complex, thereby disrupting TNF signaling. Also acts on host proteins without a death domain: catalyzes arginine GlcNAcylation of host small Rab GTPase (Rab1, Rab5 and Rab11), thereby preventing GTPase activity and leading to impaired host vesicular protein transport. Also mediates auto-GlcNAcylation, which is required for activity toward death domain-containing host target proteins. This is Protein-arginine N-acetylglucosaminyltransferase SseK3 from Salmonella typhimurium (strain SL1344).